We begin with the raw amino-acid sequence, 780 residues long: Ral guanine nucleotide dissociation stimulator-like 2 (780 aa).

A disordered region spans residues 1 to 92 (MLPRPLRLLW…PTPPPRSSRR (92 aa)). The residue at position 13 (S13) is a Phosphoserine. The segment covering 31–42 (GGGPGGRGVGGG) has biased composition (gly residues). Residues 43–65 (QEEEEEEEEDEAPVSVWDEEEDG) show a composition bias toward acidic residues. Positions 89–213 (SSRRLRAGTL…GSADLIRNLR (125 aa)) constitute an N-terminal Ras-GEF domain. The Ras-GEF domain occupies 244 to 516 (LADHLAEQLT…HRVSCEVEPP (273 aa)). Residues 596–613 (HSLADPSHLSPPASSPRP) are compositionally biased toward low complexity. Disordered regions lie at residues 596-651 (HSLA…GASD) and 741-769 (TATL…PRIK). Residues 651 to 738 (DCRIIRVQME…HDFLLRQRRR (88 aa)) form the Ras-associating domain. The span at 741 to 758 (TATLGLTSSPSASGTPPS) shows a compositional bias: low complexity.

Interacts with SAMD9.

Probable guanine nucleotide exchange factor. Putative effector of Ras and/or Rap. Associates with the GTP-bound form of Rap 1A and H-Ras in vitro. This is Ral guanine nucleotide dissociation stimulator-like 2 (RGL2) from Canis lupus familiaris (Dog).